The chain runs to 542 residues: CTP synthase (542 aa).

Residues 1 to 265 (MARYIFITGG…DQEVLSAFGI (265 aa)) are amidoligase domain. A CTP-binding site is contributed by Ser-13. UTP is bound at residue Ser-13. 14 to 19 (SLGKGL) serves as a coordination point for ATP. Tyr-54 contributes to the L-glutamine binding site. An ATP-binding site is contributed by Asp-71. Mg(2+) is bound by residues Asp-71 and Glu-139. CTP is bound by residues 146–148 (DIE), 186–191 (KTKPTQ), and Lys-222. Residues 186–191 (KTKPTQ) and Lys-222 contribute to the UTP site. 238 to 240 (RDV) is an ATP binding site. Residues 291–541 (TIAIVGKYTG…IAAAMEQSRL (251 aa)) enclose the Glutamine amidotransferase type-1 domain. L-glutamine is bound at residue Gly-353. The Nucleophile; for glutamine hydrolysis role is filled by Cys-380. L-glutamine-binding positions include 381-384 (FGMQ), Glu-404, and Arg-469. Catalysis depends on residues His-514 and Glu-516.

Belongs to the CTP synthase family. As to quaternary structure, homotetramer.

It catalyses the reaction UTP + L-glutamine + ATP + H2O = CTP + L-glutamate + ADP + phosphate + 2 H(+). It carries out the reaction L-glutamine + H2O = L-glutamate + NH4(+). The catalysed reaction is UTP + NH4(+) + ATP = CTP + ADP + phosphate + 2 H(+). It participates in pyrimidine metabolism; CTP biosynthesis via de novo pathway; CTP from UDP: step 2/2. Its activity is regulated as follows. Allosterically activated by GTP, when glutamine is the substrate; GTP has no effect on the reaction when ammonia is the substrate. The allosteric effector GTP functions by stabilizing the protein conformation that binds the tetrahedral intermediate(s) formed during glutamine hydrolysis. Inhibited by the product CTP, via allosteric rather than competitive inhibition. In terms of biological role, catalyzes the ATP-dependent amination of UTP to CTP with either L-glutamine or ammonia as the source of nitrogen. Regulates intracellular CTP levels through interactions with the four ribonucleotide triphosphates. This chain is CTP synthase, found in Beijerinckia indica subsp. indica (strain ATCC 9039 / DSM 1715 / NCIMB 8712).